The chain runs to 92 residues: SPbeta prophage-derived uncharacterized protein YoqM (92 aa).

The signal sequence occupies residues M1–A25.

The polypeptide is SPbeta prophage-derived uncharacterized protein YoqM (yoqM) (Bacillus subtilis (strain 168)).